A 450-amino-acid polypeptide reads, in one-letter code: Large terminase protein homolog UL15b (450 aa).

It belongs to the herpesviridae large terminase family.

The polypeptide is Large terminase protein homolog UL15b (UL15b) (Psittacid herpesvirus 1 (isolate Amazon parrot/-/97-0001/1997) (PsHV-1)).